The sequence spans 155 residues: Keratin-associated protein 4-7 (155 aa).

A run of 20 repeats spans residues 5–9, 24–28, 29–33, 34–38, 44–48, 49–53, 54–58, 59–63, 64–68, 69–73, 74–78, 79–83, 84–88, 89–93, 94–98, 99–103, 104–108, 109–113, 114–118, and 119–123. A 20 X 5 AA repeats of C-C-[GIKRQVHEML]-[SPTRV]-[STVQRCP] region spans residues 5–123; it reads CCGSVCSDQG…CCRPCCCLRP (119 aa).

It belongs to the KRTAP type 4 family. Interacts with hair keratins. As to expression, expressed in the hair follicles.

Its function is as follows. In the hair cortex, hair keratin intermediate filaments are embedded in an interfilamentous matrix, consisting of hair keratin-associated proteins (KRTAP), which are essential for the formation of a rigid and resistant hair shaft through their extensive disulfide bond cross-linking with abundant cysteine residues of hair keratins. The matrix proteins include the high-sulfur and high-glycine-tyrosine keratins. In Homo sapiens (Human), this protein is Keratin-associated protein 4-7 (KRTAP4-7).